A 280-amino-acid polypeptide reads, in one-letter code: MNVKAYAKVNISLDVIGKREDGYHLLKMIMQSINLYDVLDIRIIDEGIKITSNRRNIPTNDKNIAYRAAKLFMDTYKIDKGISIHINKRIPVAAGLAGGSADGAAVLKAMRDIFKKDVSDEELINLGVKIGADIPFCIVGGTAFCEGIGEKITKLRSMNGKIIVLVKPDFGVSTKMVYTEYDKCLDVKHPDSEGLVKAVNNGHFKFVVNNMVNVLENVTAVKYKEINEIKEKALEYNSIGTMMSGSGPTVFSFFDNTKEAEKYFYEMKKEYNKVFITRTV.

Lys-8 is an active-site residue. 91–101 (PVAAGLAGGSA) serves as a coordination point for ATP. The active site involves Asp-133.

It belongs to the GHMP kinase family. IspE subfamily.

It carries out the reaction 4-CDP-2-C-methyl-D-erythritol + ATP = 4-CDP-2-C-methyl-D-erythritol 2-phosphate + ADP + H(+). It functions in the pathway isoprenoid biosynthesis; isopentenyl diphosphate biosynthesis via DXP pathway; isopentenyl diphosphate from 1-deoxy-D-xylulose 5-phosphate: step 3/6. Its function is as follows. Catalyzes the phosphorylation of the position 2 hydroxy group of 4-diphosphocytidyl-2C-methyl-D-erythritol. The chain is 4-diphosphocytidyl-2-C-methyl-D-erythritol kinase from Clostridium acetobutylicum (strain ATCC 824 / DSM 792 / JCM 1419 / IAM 19013 / LMG 5710 / NBRC 13948 / NRRL B-527 / VKM B-1787 / 2291 / W).